The following is a 518-amino-acid chain: Phenylacetate 2-hydroxylase (518 aa).

Cysteine 437 provides a ligand contact to heme.

Belongs to the cytochrome P450 family.

The enzyme catalyses 2-phenylacetate + reduced [NADPH--hemoprotein reductase] + O2 = (2-hydroxyphenyl)acetate + oxidized [NADPH--hemoprotein reductase] + H2O + H(+). It participates in aromatic compound metabolism; phenylacetate degradation. Functionally, catalyzes the hydroxylation of phenylacetate to 2-hydroxyphenylacetate in the homogentisate pathway. The homogentisate pathway is used to catabolize phenylacetate and use it as a carbon source. Can also catalyze the hydroxylation of 3-hydroxyphenylacetate to 2,5-dihydroxyphenylacetate (homogentisate) at low efficiency. This is Phenylacetate 2-hydroxylase (phacA) from Emericella nidulans (Aspergillus nidulans).